Consider the following 63-residue polypeptide: Translational regulator CsrA (63 aa).

The protein belongs to the CsrA/RsmA family. Homodimer; the beta-strands of each monomer intercalate to form a hydrophobic core, while the alpha-helices form wings that extend away from the core.

It is found in the cytoplasm. Its function is as follows. A key translational regulator that binds mRNA to regulate translation initiation and/or mRNA stability. Mediates global changes in gene expression, shifting from rapid growth to stress survival by linking envelope stress, the stringent response and the catabolite repression systems. Usually binds in the 5'-UTR; binding at or near the Shine-Dalgarno sequence prevents ribosome-binding, repressing translation, binding elsewhere in the 5'-UTR can activate translation and/or stabilize the mRNA. Its function is antagonized by small RNA(s). The sequence is that of Translational regulator CsrA from Haemophilus influenzae (strain 86-028NP).